Reading from the N-terminus, the 717-residue chain is Polyribonucleotide nucleotidyltransferase (717 aa).

The Mg(2+) site is built by Asp487 and Asp493. The 60-residue stretch at 554-613 folds into the KH domain; it reads PRITVINVPKDKIRDVIGTGGKVIREIVEYSGCKIDIEDDGTIKIAATSDEQAQKAIDRI. The 69-residue stretch at 623-691 folds into the S1 motif domain; it reads GQIYTGKVVK…DRGKVKLSMR (69 aa).

Belongs to the polyribonucleotide nucleotidyltransferase family. The cofactor is Mg(2+).

Its subcellular location is the cytoplasm. The catalysed reaction is RNA(n+1) + phosphate = RNA(n) + a ribonucleoside 5'-diphosphate. Involved in mRNA degradation. Catalyzes the phosphorolysis of single-stranded polyribonucleotides processively in the 3'- to 5'-direction. This Acidiphilium cryptum (strain JF-5) protein is Polyribonucleotide nucleotidyltransferase.